The chain runs to 372 residues: NAD(P)H-quinone oxidoreductase subunit 1 (372 aa).

A run of 8 helical transmembrane segments spans residues methionine 27–valine 47, isoleucine 97–valine 117, valine 128–methionine 148, alanine 166–methionine 186, valine 204–leucine 224, valine 266–valine 286, threonine 308–leucine 328, and phenylalanine 347–proline 367.

This sequence belongs to the complex I subunit 1 family. In terms of assembly, NDH-1 is composed of at least 11 different subunits.

It is found in the cellular thylakoid membrane. The catalysed reaction is a plastoquinone + NADH + (n+1) H(+)(in) = a plastoquinol + NAD(+) + n H(+)(out). The enzyme catalyses a plastoquinone + NADPH + (n+1) H(+)(in) = a plastoquinol + NADP(+) + n H(+)(out). NDH-1 shuttles electrons from an unknown electron donor, via FMN and iron-sulfur (Fe-S) centers, to quinones in the respiratory and/or the photosynthetic chain. The immediate electron acceptor for the enzyme in this species is believed to be plastoquinone. Couples the redox reaction to proton translocation, and thus conserves the redox energy in a proton gradient. This chain is NAD(P)H-quinone oxidoreductase subunit 1, found in Synechococcus sp. (strain CC9311).